The following is a 771-amino-acid chain: Ribonucleoside-diphosphate reductase large subunit (771 aa).

The region spanning 1-92 (MFVIKRNGYK…ISNLHKETKK (92 aa)) is the ATP-cone domain. ATP is bound by residues 5 to 6 (KR), 11 to 17 (ENVMFDK), Thr-53, Asp-57, and Lys-88. Residues Ser-202 and Ser-217 each contribute to the GDP site. Residues 226-228 (DSI), Lys-243, and Arg-256 contribute to the dTTP site. Asn-427 provides a ligand contact to GDP. The active-site Proton acceptor is Asn-427. Cys-429 (cysteine radical intermediate) is an active-site residue. Residues Glu-431 and 603 to 606 (TAST) contribute to the GDP site. Glu-431 functions as the Proton acceptor in the catalytic mechanism.

The protein belongs to the ribonucleoside diphosphate reductase large chain family. Interacts with RNR2/OPG047 subunit. The cofactor is Mg(2+).

It carries out the reaction a 2'-deoxyribonucleoside 5'-diphosphate + [thioredoxin]-disulfide + H2O = a ribonucleoside 5'-diphosphate + [thioredoxin]-dithiol. Its function is as follows. Ribonucleoside-diphosphate reductase holoenzyme provides the precursors necessary for viral DNA synthesis. Allows virus growth in non-dividing cells. Catalyzes the biosynthesis of deoxyribonucleotides from the corresponding ribonucleotides. In Monkeypox virus, this protein is Ribonucleoside-diphosphate reductase large subunit (OPG080).